Consider the following 488-residue polypeptide: UDP-N-acetylmuramate--L-alanine ligase (488 aa).

129–135 (GSHGKTT) contacts ATP.

Belongs to the MurCDEF family.

The protein localises to the cytoplasm. It catalyses the reaction UDP-N-acetyl-alpha-D-muramate + L-alanine + ATP = UDP-N-acetyl-alpha-D-muramoyl-L-alanine + ADP + phosphate + H(+). The protein operates within cell wall biogenesis; peptidoglycan biosynthesis. In terms of biological role, cell wall formation. This is UDP-N-acetylmuramate--L-alanine ligase from Prochlorococcus marinus (strain MIT 9313).